Consider the following 275-residue polypeptide: Peptidoglycan-N-acetylglucosamine deacetylase BC_1960 (275 aa).

One can recognise a NodB homology domain in the interval 81-262 (AEVALTFDDG…QLKTKGARFV (182 aa)). Aspartate 88 functions as the Proton acceptor in the catalytic mechanism. Zn(2+)-binding residues include aspartate 89, histidine 139, and histidine 143. 2-hydroxyproline; partial is present on proline 179. Catalysis depends on histidine 233, which acts as the Proton donor.

This sequence belongs to the polysaccharide deacetylase family. It depends on Zn(2+) as a cofactor. In terms of processing, hydroxylated on Pro-179. Hydroxylation alters the active site and enhances significantly deacetylase activity, probably by creating a more favorable environment for transition-state stabilization. It might be autocatalytic.

It carries out the reaction peptidoglycan-N-acetyl-D-glucosamine + H2O = peptidoglycan-D-glucosamine + acetate.. Deacetylase activity is stimulated by hydroxylation on Pro-179. Inhibited by CuCl(2) and ZnCl(2). Inhibited by the hydroxamate N-hydroxy-4-(naphthalene-1-yl)benzamide (NHNB). Catalyzes the deacetylation of N-acetylglucosamine (GlcNAc) residues in peptidoglycan. Also acts on soluble chitin substrates and N-acetylchitooligomers. Acts on cell wall peptidoglycan from the Gram-positive bacteria B.cereus and B.subtilis and the Gram-negative bacterium H.pylori. Not active on acetylated xylan. This is Peptidoglycan-N-acetylglucosamine deacetylase BC_1960 from Bacillus cereus (strain ATCC 14579 / DSM 31 / CCUG 7414 / JCM 2152 / NBRC 15305 / NCIMB 9373 / NCTC 2599 / NRRL B-3711).